A 324-amino-acid polypeptide reads, in one-letter code: bZIP transcription factor 46 (324 aa).

Residues 106-127 are disordered; sequence LGGSDDEDPAAAAAAAAPAQRQ. Over residues 115 to 124 the composition is skewed to low complexity; sequence AAAAAAAAPA. Residues 242 to 287 form the bZIP domain; the sequence is VERRQRRMIKNRESAARSRARKQAYIMELEAEVAKLKEQKAELQKK. Residues 244-263 are basic motif; it reads RRQRRMIKNRESAARSRARK. The interval 270-284 is leucine-zipper; sequence LEAEVAKLKEQKAEL.

Interacts with MODD. Interacts with SAPK2, SAPK6 and SAPK9. Phosphorylated on serine and threonine residues by SAPK2, SAPK6 and SAPK9. Phosphorylation is required for full transactivation activity. Expressed in roots, shoots, leaves, flag leaves, stems, flowers and panicles. Widely expressed.

It localises to the nucleus. Its function is as follows. Transcription factor involved in abscisic acid (ABA) signaling pathway. Transcription factor activity is fully activated by ABA. Acts as a positive regulator of the expression of abiotic stress-responsive genes through an ABA-dependent signaling pathway. Acts as a positive regulator of ABA signaling and drought stress tolerance. Plays an important role in ABA and auxin responses. Involved in ABA signaling and stress responses by directly binding to the ABA-responsive element (ABRE)-containing genes, especially WRKY family genes. Modulates response to auxin. Suppresses auxin signaling by targeting ABRE-containing genes related to auxin metabolism or signaling. The sequence is that of bZIP transcription factor 46 from Oryza sativa subsp. japonica (Rice).